The following is a 274-amino-acid chain: Large ribosomal subunit protein uL2 (274 aa).

Residues 221-274 (RGTAMNPVDHPHGGGEGRNFGKHPVTPWGVQTKGKKTRSNKRTDKFIVRRRSKK) are disordered.

It belongs to the universal ribosomal protein uL2 family. As to quaternary structure, part of the 50S ribosomal subunit. Forms a bridge to the 30S subunit in the 70S ribosome.

One of the primary rRNA binding proteins. Required for association of the 30S and 50S subunits to form the 70S ribosome, for tRNA binding and peptide bond formation. It has been suggested to have peptidyltransferase activity; this is somewhat controversial. Makes several contacts with the 16S rRNA in the 70S ribosome. This Yersinia pseudotuberculosis serotype O:1b (strain IP 31758) protein is Large ribosomal subunit protein uL2.